Here is a 284-residue protein sequence, read N- to C-terminus: MSNTIVIVYLGANRIEIGRSADACPQEIIAWKTGSINEKNREELKKIFEHYFQICNILGNREVQVLILEDIFISVVEKRIICSILFKEFDCAHVSFVPRAIVHCLSCNTRNAIVIDIGTNYTTCVPIFDLRPLQQFIKYSKRGKRQVESRIPLPGSLYMPIFFDEEYNSKNCEVDETPVINLVKNIVESLPIDLRRPLRENIIIVNIEEAYETVIRNLFKLKMDTSKIQFPKNYWQAGSACAKILLHYKGSNIVGIERDEFYNNPHIAPDWFDYYFRTGVKRLQ.

This sequence belongs to the actin family. ARP10 subfamily. Self-associates. Component of the dynactin complex composed of at least ARP1, JNM1, NIP100 and ARP10. Dynactin comprises a short rod of the ARP1 filament attached to ARP10 at its pointed-end and probably associated with the capping protein at its barbed-end. The rod is implicated in dynein cargo binding. A sidearm formed by NIP100 projects from the ARP1 filament and is implicated in motor binding. Interacts with ARP1 and JNM1.

It is found in the cytoplasm. Its subcellular location is the cytoskeleton. Its function is as follows. Pointed-end-associated component of the dynactin complex which assists cytoplasmic dynein by increasing its processivity and by regulation of its cargo binding. The dynactin complex is required for the spindle translocation late in anaphase and is involved in a cell wall synthesis checkpoint. May regulate the association of the dynactin complex with the plasma membrane. The protein is Actin-like protein ARP10 (ARP10) of Saccharomyces cerevisiae (strain ATCC 204508 / S288c) (Baker's yeast).